Reading from the N-terminus, the 247-residue chain is Epidermal cell differentiation inhibitor (247 aa).

An N-terminal signal peptide occupies residues 1-35 (MKNKLLFKIFLSLSLALSVYSINDKIIEVSNTSLA). The 209-residue stretch at 39 to 247 (KNFTDLDEAT…IIITAIVFKK (209 aa)) folds into the TR mART core domain. Active-site residues include R120, S173, and E215.

It to ADP-ribosyltransferase C3 of Clostridium.

In terms of biological role, inhibits terminal differentiation of cultured mouse keratinocytes. In culture, also inhibits the differentiation of human keratinocytes. Probable ADP-ribosyltransferase. This is Epidermal cell differentiation inhibitor from Staphylococcus aureus.